The primary structure comprises 479 residues: Glutamyl-tRNA reductase (479 aa).

Substrate is bound by residues 49 to 52 (TCNR), S109, 114 to 116 (EQQ), and Q120. C50 (nucleophile) is an active-site residue. 191 to 196 (GAGSMG) is an NADP(+) binding site.

Belongs to the glutamyl-tRNA reductase family. Homodimer.

The enzyme catalyses (S)-4-amino-5-oxopentanoate + tRNA(Glu) + NADP(+) = L-glutamyl-tRNA(Glu) + NADPH + H(+). Its pathway is porphyrin-containing compound metabolism; protoporphyrin-IX biosynthesis; 5-aminolevulinate from L-glutamyl-tRNA(Glu): step 1/2. In terms of biological role, catalyzes the NADPH-dependent reduction of glutamyl-tRNA(Glu) to glutamate 1-semialdehyde (GSA). The chain is Glutamyl-tRNA reductase from Rhodococcus jostii (strain RHA1).